An 837-amino-acid chain; its full sequence is Striatin-interacting protein 1 (837 aa).

Position 1 is an N-acetylmethionine (Met1). The tract at residues 1–67 (MEPAAGTPGP…DSEGYSESPD (67 aa)) is disordered. The segment covering 18 to 35 (PQPPPPPPPATAQPPPGA) has biased composition (pro residues). Positions 47–60 (KAREFNRNQRKDSE) are enriched in basic and acidic residues. Phosphoserine is present on residues Ser59, Ser335, and Ser339. The tract at residues 336–423 (PPASASDLIE…DRLTCPKGLP (88 aa)) is disordered. Positions 356–377 (KALIKQDNLDAFNERDPYKADD) are enriched in basic and acidic residues. Positions 378 to 391 (SREEEEENDDDNSL) are enriched in acidic residues. Ser788 is subject to Phosphoserine. Residues 796-837 (DNCLQSVLGQRVDLPEDFQMNYDLWLEREVFSKPISWEELLQ) are required for STRIPAK core complex formation.

The protein belongs to the STRIP family. In terms of assembly, part of the core of STRIPAK complexes composed of PP2A catalytic and scaffolding subunits, the striatins (PP2A regulatory subunits), the striatin-associated proteins MOB4, STRIP1 and STRIP2, PDCD10 and members of the STE20 kinases, such as STK24 and STK26. The STRIPAK complex can be extended by adapter proteins such as SLMAP:SIKE1, CTTNBP2 or CTTNBP2NL. Interacts with CDC42BPB. Interacts with CTTNBP2NL.

It localises to the cytoplasm. Plays a role in the regulation of cell morphology and cytoskeletal organization. Required in the cortical actin filament dynamics and cell shape. Part of the striatin-interacting phosphatase and kinase (STRIPAK) complexes. STRIPAK complexes have critical roles in protein (de)phosphorylation and are regulators of multiple signaling pathways including Hippo, MAPK, nuclear receptor and cytoskeleton remodeling. Different types of STRIPAK complexes are involved in a variety of biological processes such as cell growth, differentiation, apoptosis, metabolism and immune regulation. The sequence is that of Striatin-interacting protein 1 (STRIP1) from Bos taurus (Bovine).